The following is a 485-amino-acid chain: Pelle-like serine/threonine-protein kinase pik-1 (485 aa).

The segment covering 115–132 (TSRVSKQMVQPPGSQSAS) has biased composition (polar residues). The tract at residues 115–155 (TSRVSKQMVQPPGSQSASRLKKTEIKESSPSPAAAAASQLS) is disordered. Residues 142–152 (SSPSPAAAAAS) are compositionally biased toward low complexity. A Protein kinase domain is found at 185 to 485 (FAVSNVIGKG…LCKNSIPPVV (301 aa)). ATP contacts are provided by residues 191–199 (IGKGGYGTV) and Lys214. Asp318 serves as the catalytic Proton acceptor.

This sequence belongs to the protein kinase superfamily. TKL Ser/Thr protein kinase family. Pelle subfamily. Interacts with actl-1. As to expression, expressed in the nervous system.

The enzyme catalyses L-seryl-[protein] + ATP = O-phospho-L-seryl-[protein] + ADP + H(+). It carries out the reaction L-threonyl-[protein] + ATP = O-phospho-L-threonyl-[protein] + ADP + H(+). Functionally, through association with the adapter actl-1, may act downstream of the receptor complex composed of ilcr-1 and ilcr-2, which is a signaling complex that modulates neuronal activity and animal behavior in response to sensory neuron input. The protein is Pelle-like serine/threonine-protein kinase pik-1 of Caenorhabditis elegans.